A 93-amino-acid polypeptide reads, in one-letter code: Small ribosomal subunit protein uS19c (93 aa).

The protein belongs to the universal ribosomal protein uS19 family.

The protein resides in the plastid. It is found in the chloroplast. In terms of biological role, protein S19 forms a complex with S13 that binds strongly to the 16S ribosomal RNA. The polypeptide is Small ribosomal subunit protein uS19c (Zygnema circumcarinatum (Green alga)).